We begin with the raw amino-acid sequence, 806 residues long: N-terminal kinase-like protein (806 aa).

One can recognise a Protein kinase domain in the interval 14–314 (FELSPEPPEG…PEDFCRHKVL (301 aa)). HEAT repeat units follow at residues 350–388 (IIPVVVKMFSSTDRAMRIRLLQQMEQFIQYLDEPTVNTQ), 389–427 (IFPHVTHGFLDTNPAIREQTVKSMLLLAPKLNEANLNVE), and 507–545 (ILPVLCGLTVDPEKSVRDQAFKTIRSFLSKLESVSEDPT). Disordered stretches follow at residues 586-642 (RAHP…TADR) and 663-806 (DDWS…RKLD). Residues 601–611 (RPVPEGNPAPA) show a composition bias toward pro residues. Position 752 is a phosphoserine (S752). Over residues 752–762 (SWGEDNWEGLE) the composition is skewed to acidic residues. Residues 755–795 (EDNWEGLEAESRQVKAELARKKREERRREMEAKRAEKKTTK) are a coiled coil. 2 stretches are compositionally biased toward basic and acidic residues: residues 763–773 (AESRQVKAELA) and 780–793 (RRREMEAKRAEKKT). Positions 791 to 806 (KKTTKGPMKLGARKLD) are interaction with COPB1.

This sequence belongs to the protein kinase superfamily. In terms of assembly, homooligomer. Interacts with GORAB. Interacts with COPA, COPB1 and COPB2. Interacts with AP2B1. As to expression, expressed in diaphragm, quadriceps, thymus, liver, lung, spleen, kidney, heart and brain. Prominently expressed in neurons, and enriched at central nervous system synapses and neuromuscular junctions.

The protein localises to the cytoplasm. The protein resides in the cytoskeleton. Its subcellular location is the microtubule organizing center. It localises to the centrosome. It is found in the endoplasmic reticulum-Golgi intermediate compartment. The protein localises to the golgi apparatus. The protein resides in the cis-Golgi network. Regulates COPI-mediated retrograde protein traffic at the interface between the Golgi apparatus and the endoplasmic reticulum. Involved in the maintenance of the Golgi apparatus morphology. In Mus musculus (Mouse), this protein is N-terminal kinase-like protein (Scyl1).